Consider the following 277-residue polypeptide: Large ribosomal subunit protein uL2 (277 aa).

2 disordered regions span residues 32 to 58 and 225 to 277; these read KSLT…RGGG and VAMN…RRNK. Residues 258-277 are compositionally biased toward basic residues; sequence YKTRKKKRYSDKFIIKRRNK.

It belongs to the universal ribosomal protein uL2 family. Part of the 50S ribosomal subunit. Forms a bridge to the 30S subunit in the 70S ribosome.

One of the primary rRNA binding proteins. Required for association of the 30S and 50S subunits to form the 70S ribosome, for tRNA binding and peptide bond formation. It has been suggested to have peptidyltransferase activity; this is somewhat controversial. Makes several contacts with the 16S rRNA in the 70S ribosome. The chain is Large ribosomal subunit protein uL2 from Borrelia garinii subsp. bavariensis (strain ATCC BAA-2496 / DSM 23469 / PBi) (Borreliella bavariensis).